The sequence spans 248 residues: Small ribosomal subunit protein eS1 (248 aa).

Residues 1–21 form a disordered region; that stretch reads MAVGKDKRISKGKKGGKKKIV.

Belongs to the eukaryotic ribosomal protein eS1 family. Component of the small ribosomal subunit. Mature ribosomes consist of a small (40S) and a large (60S) subunit. The 40S subunit contains about 33 different proteins and 1 molecule of RNA (18S). The 60S subunit contains about 49 different proteins and 3 molecules of RNA (25S, 5.8S and 5S).

Its subcellular location is the cytoplasm. This chain is Small ribosomal subunit protein eS1, found in Syntrichia ruralis (Great hairy screw-moss).